The following is a 257-amino-acid chain: NAD-capped RNA hydrolase NudC (257 aa).

Residues Lys-25 and Arg-69 each coordinate substrate. Cys-98 and Cys-101 together coordinate Zn(2+). Residue Glu-111 participates in substrate binding. Cys-116 and Cys-119 together coordinate Zn(2+). Position 124 (Tyr-124) interacts with substrate. The Nudix hydrolase domain occupies 125 to 248 (PQIAPCIIVA…TVARRLIEDT (124 aa)). A divalent metal cation is bound by residues Ala-158, Glu-174, and Glu-178. Positions 159-180 (GFVEVGETLEQAVAREVMEESG) match the Nudix box motif. 192–199 (QPWPFPQS) contributes to the substrate binding site. Glu-219 is an a divalent metal cation binding site. Position 241 (Ala-241) interacts with substrate.

This sequence belongs to the Nudix hydrolase family. NudC subfamily. As to quaternary structure, homodimer. Requires Mg(2+) as cofactor. The cofactor is Mn(2+). It depends on Zn(2+) as a cofactor.

The catalysed reaction is a 5'-end NAD(+)-phospho-ribonucleoside in mRNA + H2O = a 5'-end phospho-adenosine-phospho-ribonucleoside in mRNA + beta-nicotinamide D-ribonucleotide + 2 H(+). The enzyme catalyses NAD(+) + H2O = beta-nicotinamide D-ribonucleotide + AMP + 2 H(+). It catalyses the reaction NADH + H2O = reduced beta-nicotinamide D-ribonucleotide + AMP + 2 H(+). MRNA decapping enzyme that specifically removes the nicotinamide adenine dinucleotide (NAD) cap from a subset of mRNAs by hydrolyzing the diphosphate linkage to produce nicotinamide mononucleotide (NMN) and 5' monophosphate mRNA. The NAD-cap is present at the 5'-end of some mRNAs and stabilizes RNA against 5'-processing. Has preference for mRNAs with a 5'-end purine. Catalyzes the hydrolysis of a broad range of dinucleotide pyrophosphates. The polypeptide is NAD-capped RNA hydrolase NudC (Escherichia fergusonii (strain ATCC 35469 / DSM 13698 / CCUG 18766 / IAM 14443 / JCM 21226 / LMG 7866 / NBRC 102419 / NCTC 12128 / CDC 0568-73)).